The following is a 291-amino-acid chain: Formamidopyrimidine-DNA glycosylase (291 aa).

P2 acts as the Schiff-base intermediate with DNA in catalysis. E3 serves as the catalytic Proton donor. The active-site Proton donor; for beta-elimination activity is K61. DNA-binding residues include H103, R123, and R165. An FPG-type zinc finger spans residues 251 to 285; it reads EVYGRGGQACSRCASTIRRDAFMNRSSFSCPACQP. R275 serves as the catalytic Proton donor; for delta-elimination activity.

This sequence belongs to the FPG family. As to quaternary structure, monomer. Zn(2+) is required as a cofactor.

It carries out the reaction Hydrolysis of DNA containing ring-opened 7-methylguanine residues, releasing 2,6-diamino-4-hydroxy-5-(N-methyl)formamidopyrimidine.. It catalyses the reaction 2'-deoxyribonucleotide-(2'-deoxyribose 5'-phosphate)-2'-deoxyribonucleotide-DNA = a 3'-end 2'-deoxyribonucleotide-(2,3-dehydro-2,3-deoxyribose 5'-phosphate)-DNA + a 5'-end 5'-phospho-2'-deoxyribonucleoside-DNA + H(+). In terms of biological role, involved in base excision repair of DNA damaged by oxidation or by mutagenic agents. Acts as a DNA glycosylase that recognizes and removes damaged bases. Has a preference for oxidized purines, such as 7,8-dihydro-8-oxoguanine (8-oxoG). Has AP (apurinic/apyrimidinic) lyase activity and introduces nicks in the DNA strand. Cleaves the DNA backbone by beta-delta elimination to generate a single-strand break at the site of the removed base with both 3'- and 5'-phosphates. In Parafrankia sp. (strain EAN1pec), this protein is Formamidopyrimidine-DNA glycosylase.